Here is a 248-residue protein sequence, read N- to C-terminus: Pyridoxine 5'-phosphate synthase (248 aa).

Asparagine 7 contacts 3-amino-2-oxopropyl phosphate. Position 9-10 (9-10) interacts with 1-deoxy-D-xylulose 5-phosphate; sequence DH. Arginine 18 lines the 3-amino-2-oxopropyl phosphate pocket. Histidine 52 (proton acceptor) is an active-site residue. Residues arginine 54 and histidine 59 each coordinate 1-deoxy-D-xylulose 5-phosphate. Catalysis depends on glutamate 79, which acts as the Proton acceptor. Threonine 109 is a binding site for 1-deoxy-D-xylulose 5-phosphate. Histidine 201 serves as the catalytic Proton donor. Residues glycine 202 and 223 to 224 contribute to the 3-amino-2-oxopropyl phosphate site; that span reads GH.

The protein belongs to the PNP synthase family. Homooctamer; tetramer of dimers.

Its subcellular location is the cytoplasm. The enzyme catalyses 3-amino-2-oxopropyl phosphate + 1-deoxy-D-xylulose 5-phosphate = pyridoxine 5'-phosphate + phosphate + 2 H2O + H(+). The protein operates within cofactor biosynthesis; pyridoxine 5'-phosphate biosynthesis; pyridoxine 5'-phosphate from D-erythrose 4-phosphate: step 5/5. Its function is as follows. Catalyzes the complicated ring closure reaction between the two acyclic compounds 1-deoxy-D-xylulose-5-phosphate (DXP) and 3-amino-2-oxopropyl phosphate (1-amino-acetone-3-phosphate or AAP) to form pyridoxine 5'-phosphate (PNP) and inorganic phosphate. In Opitutus terrae (strain DSM 11246 / JCM 15787 / PB90-1), this protein is Pyridoxine 5'-phosphate synthase.